The sequence spans 289 residues: tRNA pseudouridine synthase A (289 aa).

Asp53 (nucleophile) is an active-site residue. Tyr119 lines the substrate pocket.

This sequence belongs to the tRNA pseudouridine synthase TruA family. In terms of assembly, homodimer.

It catalyses the reaction uridine(38/39/40) in tRNA = pseudouridine(38/39/40) in tRNA. Its function is as follows. Formation of pseudouridine at positions 38, 39 and 40 in the anticodon stem and loop of transfer RNAs. This Corynebacterium glutamicum (strain ATCC 13032 / DSM 20300 / JCM 1318 / BCRC 11384 / CCUG 27702 / LMG 3730 / NBRC 12168 / NCIMB 10025 / NRRL B-2784 / 534) protein is tRNA pseudouridine synthase A.